A 272-amino-acid chain; its full sequence is Hydroxyethylthiazole kinase (272 aa).

A substrate-binding site is contributed by Met-46. Residues Arg-122 and Thr-168 each coordinate ATP. Gly-195 provides a ligand contact to substrate.

This sequence belongs to the Thz kinase family. It depends on Mg(2+) as a cofactor.

The enzyme catalyses 5-(2-hydroxyethyl)-4-methylthiazole + ATP = 4-methyl-5-(2-phosphooxyethyl)-thiazole + ADP + H(+). It functions in the pathway cofactor biosynthesis; thiamine diphosphate biosynthesis; 4-methyl-5-(2-phosphoethyl)-thiazole from 5-(2-hydroxyethyl)-4-methylthiazole: step 1/1. Catalyzes the phosphorylation of the hydroxyl group of 4-methyl-5-beta-hydroxyethylthiazole (THZ). The polypeptide is Hydroxyethylthiazole kinase (Alkaliphilus metalliredigens (strain QYMF)).